A 210-amino-acid chain; its full sequence is Guanylate kinase (210 aa).

The Guanylate kinase-like domain maps to 6–184; the sequence is GNIYIVVAPS…ARLDLISIVR (179 aa). 13–20 serves as a coordination point for ATP; that stretch reads APSGAGKT.

This sequence belongs to the guanylate kinase family.

Its subcellular location is the cytoplasm. The catalysed reaction is GMP + ATP = GDP + ADP. Essential for recycling GMP and indirectly, cGMP. The chain is Guanylate kinase from Chromobacterium violaceum (strain ATCC 12472 / DSM 30191 / JCM 1249 / CCUG 213 / NBRC 12614 / NCIMB 9131 / NCTC 9757 / MK).